Here is a 150-residue protein sequence, read N- to C-terminus: 3-hydroxyacyl-[acyl-carrier-protein] dehydratase FabZ (150 aa).

His-51 is an active-site residue.

It belongs to the thioester dehydratase family. FabZ subfamily.

The protein resides in the cytoplasm. It carries out the reaction a (3R)-hydroxyacyl-[ACP] = a (2E)-enoyl-[ACP] + H2O. Involved in unsaturated fatty acids biosynthesis. Catalyzes the dehydration of short chain beta-hydroxyacyl-ACPs and long chain saturated and unsaturated beta-hydroxyacyl-ACPs. This chain is 3-hydroxyacyl-[acyl-carrier-protein] dehydratase FabZ, found in Legionella pneumophila subsp. pneumophila (strain Philadelphia 1 / ATCC 33152 / DSM 7513).